The primary structure comprises 505 residues: ATP synthase subunit alpha, chloroplastic (505 aa).

170-177 serves as a coordination point for ATP; it reads GDRQTGKT.

This sequence belongs to the ATPase alpha/beta chains family. As to quaternary structure, F-type ATPases have 2 components, CF(1) - the catalytic core - and CF(0) - the membrane proton channel. CF(1) has five subunits: alpha(3), beta(3), gamma(1), delta(1), epsilon(1). CF(0) has four main subunits: a, b, b' and c.

It localises to the plastid. It is found in the chloroplast thylakoid membrane. It catalyses the reaction ATP + H2O + 4 H(+)(in) = ADP + phosphate + 5 H(+)(out). Functionally, produces ATP from ADP in the presence of a proton gradient across the membrane. The alpha chain is a regulatory subunit. This Oenothera parviflora (Small-flowered evening primrose) protein is ATP synthase subunit alpha, chloroplastic.